A 567-amino-acid polypeptide reads, in one-letter code: Urease subunit alpha (567 aa).

A Urease domain is found at 129–567 (GGVDTHIHFI…LPMAQRYFLF (439 aa)). Ni(2+) is bound by residues His134, His136, and Lys217. Lys217 is modified (N6-carboxylysine). Residue His219 participates in substrate binding. Ni(2+) is bound by residues His246 and His272. His320 (proton donor) is an active-site residue. Position 360 (Asp360) interacts with Ni(2+).

It belongs to the metallo-dependent hydrolases superfamily. Urease alpha subunit family. In terms of assembly, heterotrimer of UreA (gamma), UreB (beta) and UreC (alpha) subunits. Three heterotrimers associate to form the active enzyme. Requires Ni cation as cofactor. In terms of processing, carboxylation allows a single lysine to coordinate two nickel ions.

The protein localises to the cytoplasm. It carries out the reaction urea + 2 H2O + H(+) = hydrogencarbonate + 2 NH4(+). Its pathway is nitrogen metabolism; urea degradation; CO(2) and NH(3) from urea (urease route): step 1/1. This chain is Urease subunit alpha, found in Proteus hauseri.